Here is a 293-residue protein sequence, read N- to C-terminus: Nucleotide-binding protein BBR47_52620 (293 aa).

17 to 24 contacts ATP; it reads GMSGAGKT. Position 68–71 (68–71) interacts with GTP; it reads DLRG.

Belongs to the RapZ-like family.

In terms of biological role, displays ATPase and GTPase activities. The sequence is that of Nucleotide-binding protein BBR47_52620 from Brevibacillus brevis (strain 47 / JCM 6285 / NBRC 100599).